A 1734-amino-acid chain; its full sequence is Gag-Pol polyprotein (1734 aa).

Gly-2 carries the N-myristoyl glycine; by host lipid modification. The short motif at 109 to 112 (PTAP) is the PTAP/PSAP motif element. Positions 112–217 (PILPSGPSTQ…STTSRAFPLR (106 aa)) are disordered. The LYPX(n)L motif signature appears at 128–132 (LYPAL). The short motif at 161 to 164 (PPPY) is the PPXY motif element. At Ser-191 the chain carries Phosphoserine; by host. The interval 344–392 (GRSPTNLAKVKGITQGPNESPSAFLERLKEAYRRYTPYDPEDHGQETSV) is interaction with host PIAS4. Residues 429–434 (IFNKRE) form an interaction with host UBE2I region. 2 stretches are compositionally biased toward basic and acidic residues: residues 433–474 (RETP…REMS) and 485–498 (RQDR…RPQL). Disordered stretches follow at residues 433 to 498 (RETP…RPQL) and 512 to 551 (WAKD…EPRI). A coiled-coil region spans residues 437–477 (EEREERFRRETEENEERRRAEDEQREKERDRRRQREMSKLL). Residues 501–518 (DQCAYCKEKGHWAKDCPK) form a CCHC-type zinc finger. The region spanning 560–630 (VTFLVDTGAQ…CPYPLLGRDL (71 aa)) is the Peptidase A2 domain. The active-site Protease; shared with dimeric partner is the Asp-565. The region spanning 740–931 (LDQGILVPCQ…KQVKYLGYLL (192 aa)) is the Reverse transcriptase domain. The Mg(2+) site is built by Asp-808, Asp-882, Asp-883, Asp-1182, Glu-1220, Asp-1241, and Asp-1311. The RNase H type-1 domain occupies 1173 to 1319 (PDADHTWYTD…ADQAAREAAI (147 aa)). The HHCC-type zinc finger occupies 1386–1426 (HRLTHLGYQKMKALLDRGESPYYMLNRDKTLQYVADSCTVC). An Integrase catalytic domain is found at 1443–1601 (RGHRPGTHWE…TPYEILYGAP (159 aa)). Mg(2+) is bound by residues Asp-1454 and Asp-1513.

The protein belongs to the retroviral Pol polyprotein family. As to quaternary structure, homohexamer; further associates as homomultimer. The virus core is composed of a lattice formed from hexagonal rings, each containing six capsid monomers. Interacts with mouse UBE2I and mouse PIAS4. In terms of assembly, interacts (via PPXY motif) with host NEDD4. Interacts (via PSAP motif) with host TSG101. Interacts (via LYPX(n)L motif) with host PDCD6IP. The reverse transcriptase is a monomer (Potential). Interacts (via RNase domains) with host release factor ETF1; this interaction is essential for translational readthrough of amber codon between viral gag and pol genes, as well as for viral replication. As to quaternary structure, homodimer. Mg(2+) serves as cofactor. Ubiquitinated by ITCH. Gag can recruit the ubiquitin ligase Itch in an L domain-independent manner to facilitate virus release via a mechanism that involves Gag ubiquitination. In terms of processing, specific enzymatic cleavages by the viral protease yield mature proteins. The protease is released by autocatalytic cleavage. The polyprotein is cleaved during and after budding, this process is termed maturation. Post-translationally, sumoylated; which is required for virus replication. Phosphorylated on serine residues.

It is found in the virion. The protein resides in the host cell membrane. Its subcellular location is the host late endosome membrane. It localises to the host endosome. The protein localises to the host multivesicular body. It is found in the host cytoplasm. The enzyme catalyses DNA(n) + a 2'-deoxyribonucleoside 5'-triphosphate = DNA(n+1) + diphosphate. The catalysed reaction is Endonucleolytic cleavage to 5'-phosphomonoester.. Its activity is regulated as follows. Most efficiently inhibited by Amprenavir, which is able to block Gag-Pol processing in infected cells. Its function is as follows. Plays a role in budding and is processed by the viral protease during virion maturation outside the cell. During budding, it recruits, in a PPXY-dependent or independent manner, Nedd4-like ubiquitin ligases that conjugate ubiquitin molecules to Gag-Pol, or to Gag-Pol binding host factors. Interaction with HECT ubiquitin ligases probably links the viral protein to the host ESCRT pathway and facilitates release. In terms of biological role, targets Gag and gag-pol polyproteins to the plasma membrane via a multipartite membrane binding signal, that includes its myristoylated N-terminus. Also mediates nuclear localization of the pre-integration complex. Constituent of the pre-integration complex (PIC) which tethers the latter to mitotic chromosomes. This allows the integration of the viral genome into the host DNA. Functionally, forms the spherical core of the virion that encapsulates the genomic RNA-nucleocapsid complex. Its function is as follows. Involved in the packaging and encapsidation of two copies of the genome. Binds with high affinity to conserved UCUG elements within the packaging signal, located near the 5'-end of the genome. This binding is dependent on genome dimerization. Acts as a nucleic acid chaperone which is involved in rearrangement of nucleic acid secondary structures during gRNA retrotranscription. In terms of biological role, the aspartyl protease mediates proteolytic cleavages of Gag and Gag-Pol polyproteins during or shortly after the release of the virion from the plasma membrane. Cleavages take place as an ordered, step-wise cascade to yield mature proteins. This process is called maturation. Displays maximal activity during the budding process just prior to particle release from the cell (Potential). Cleaves the translation initiation factor eIF4G leading to the inhibition of host cap-dependent translation. RT is a multifunctional enzyme that converts the viral dimeric RNA genome into dsDNA in the cytoplasm, shortly after virus entry into the cell. This enzyme displays a DNA polymerase activity that can copy either DNA or RNA templates, and a ribonuclease H (RNase H) activity that cleaves the RNA strand of RNA-DNA heteroduplexes in a partially processive 3' to 5' endonucleasic mode. Conversion of viral genomic RNA into dsDNA requires many steps. A tRNA binds to the primer-binding site (PBS) situated at the 5' end of the viral RNA. RT uses the 3' end of the tRNA primer to perform a short round of RNA-dependent minus-strand DNA synthesis. The reading proceeds through the U5 region and ends after the repeated (R) region which is present at both ends of viral RNA. The portion of the RNA-DNA heteroduplex is digested by the RNase H, resulting in a ssDNA product attached to the tRNA primer. This ssDNA/tRNA hybridizes with the identical R region situated at the 3' end of viral RNA. This template exchange, known as minus-strand DNA strong stop transfer, can be either intra- or intermolecular. RT uses the 3' end of this newly synthesized short ssDNA to perform the RNA-dependent minus-strand DNA synthesis of the whole template. RNase H digests the RNA template except for a polypurine tract (PPT) situated at the 5' end of the genome. It is not clear if both polymerase and RNase H activities are simultaneous. RNase H probably can proceed both in a polymerase-dependent (RNA cut into small fragments by the same RT performing DNA synthesis) and a polymerase-independent mode (cleavage of remaining RNA fragments by free RTs). Secondly, RT performs DNA-directed plus-strand DNA synthesis using the PPT that has not been removed by RNase H as primers. PPT and tRNA primers are then removed by RNase H. The 3' and 5' ssDNA PBS regions hybridize to form a circular dsDNA intermediate. Strand displacement synthesis by RT to the PBS and PPT ends produces a blunt ended, linear dsDNA copy of the viral genome that includes long terminal repeats (LTRs) at both ends. Functionally, catalyzes viral DNA integration into the host chromosome, by performing a series of DNA cutting and joining reactions. This enzyme activity takes place after virion entry into a cell and reverse transcription of the RNA genome in dsDNA. The first step in the integration process is 3' processing. This step requires a complex comprising the viral genome, matrix protein and integrase. This complex is called the pre-integration complex (PIC). The integrase protein removes 2 nucleotides from each 3' end of the viral DNA, leaving recessed CA OH's at the 3' ends. In the second step that requires cell division, the PIC enters cell nucleus. In the third step, termed strand transfer, the integrase protein joins the previously processed 3' ends to the 5' ends of strands of target cellular DNA at the site of integration. The last step is viral DNA integration into host chromosome. The polypeptide is Gag-Pol polyprotein (pol) (Mus musculus (Mouse)).